Consider the following 147-residue polypeptide: Hemoglobin subunit beta-2 (147 aa).

The region spanning 3–147 (EWTDSERAII…VVSALGRQYH (145 aa)) is the Globin domain. Heme b-binding residues include His64 and His93.

This sequence belongs to the globin family. Hb 3 is a heterotetramer of two alpha-2 and two beta-2 chains. Red blood cells.

Functionally, involved in oxygen transport from gills to the various peripheral tissues. The sequence is that of Hemoglobin subunit beta-2 (hbb2) from Arctogadus glacialis (Arctic cod).